The primary structure comprises 331 residues: Ketol-acid reductoisomerase (NADP(+)) (331 aa).

A KARI N-terminal Rossmann domain is found at 2–182 (AKMYYDKDAD…GGTRAGVIET (181 aa)). NADP(+)-binding positions include 25 to 28 (FGSQ), Ser51, Ser53, and 83 to 86 (DEKQ). His108 is an active-site residue. Gly134 provides a ligand contact to NADP(+). The region spanning 183–328 (TFKEETETDL…KGLREMMAWI (146 aa)) is the KARI C-terminal knotted domain. Mg(2+) contacts are provided by Asp191, Glu195, Glu227, and Glu231. Ser252 lines the substrate pocket.

Belongs to the ketol-acid reductoisomerase family. The cofactor is Mg(2+).

The enzyme catalyses (2R)-2,3-dihydroxy-3-methylbutanoate + NADP(+) = (2S)-2-acetolactate + NADPH + H(+). It carries out the reaction (2R,3R)-2,3-dihydroxy-3-methylpentanoate + NADP(+) = (S)-2-ethyl-2-hydroxy-3-oxobutanoate + NADPH + H(+). The protein operates within amino-acid biosynthesis; L-isoleucine biosynthesis; L-isoleucine from 2-oxobutanoate: step 2/4. Its pathway is amino-acid biosynthesis; L-valine biosynthesis; L-valine from pyruvate: step 2/4. Involved in the biosynthesis of branched-chain amino acids (BCAA). Catalyzes an alkyl-migration followed by a ketol-acid reduction of (S)-2-acetolactate (S2AL) to yield (R)-2,3-dihydroxy-isovalerate. In the isomerase reaction, S2AL is rearranged via a Mg-dependent methyl migration to produce 3-hydroxy-3-methyl-2-ketobutyrate (HMKB). In the reductase reaction, this 2-ketoacid undergoes a metal-dependent reduction by NADPH to yield (R)-2,3-dihydroxy-isovalerate. In Thermoanaerobacter pseudethanolicus (strain ATCC 33223 / 39E) (Clostridium thermohydrosulfuricum), this protein is Ketol-acid reductoisomerase (NADP(+)).